Consider the following 519-residue polypeptide: Cytochrome P450 monooxygenase AtmP (519 aa).

A helical membrane pass occupies residues 21 to 41 (SMLLVVTLVILFLWFIIPSPV). C457 contacts heme.

This sequence belongs to the cytochrome P450 family. The cofactor is heme.

Its subcellular location is the membrane. The protein operates within secondary metabolite biosynthesis. In terms of biological role, cytochrome P450 monooxygenase; part of the ATM2 gene cluster that mediates the biosynthesis of aflatrem, a tremorgenic mycotoxin with acute neurotoxic effects. Synthesis of geranylgeranyl diphosphate (GGPP) by AtmG (a GGPP synthase) precedes condensation of GGPP with indole 3-glycerol phosphate, followed by epoxidation and cyclization by AtmM (a FAD-dependent monooxygenase) and AtmC (a prenyltransferase) to produce paspaline. AtmB is also essential for paspaline production, but its exact role has not been identified yet. AtmP, a cytochrome P450 monooxygenase, subsequently converts paspaline to 13-desoxypaxilline via PC-M6 by removal of the C-30 methyl group and oxidation at C-10. AtmQ, a cytochrome P450 monooxygenase, then catalyzes the oxidation of 13-desoxypaxilline, first at C-7 to produce paspalicine and then at C-13 to form paspalinine. Finally, AtmD prenylates paspalinine to form aflatrem. The chain is Cytochrome P450 monooxygenase AtmP from Aspergillus flavus.